We begin with the raw amino-acid sequence, 358 residues long: 2'-5'-oligoadenylate synthase 1A (358 aa).

An interaction with dsRNA region spans residues 14 to 61 (DKFIEVYLLPNTSFRDDVKSAINVLCDFLKERCFRDTVHPVRVSKVVK). Residue S64 coordinates ATP. Mg(2+)-binding residues include D76, D78, and D149. Positions 201 to 211 (QRPTKLKSLIR) are interaction with dsRNA. ATP is bound by residues R211, K214, and Q231.

It belongs to the 2-5A synthase family. As to quaternary structure, monomer. Homotetramer. Interacts with OAS1D. Mg(2+) is required as a cofactor.

The protein resides in the cytoplasm. It localises to the mitochondrion. It is found in the nucleus. Its subcellular location is the microsome. The protein localises to the endoplasmic reticulum. The enzyme catalyses 3 ATP = 5'-triphosphoadenylyl-(2'-&gt;5')-adenylyl-(2'-&gt;5')-adenosine + 2 diphosphate. Its activity is regulated as follows. Produced as a latent enzyme which is activated by dsRNA generated during the course of viral infection. The dsRNA activator must be at least 15 nucleotides long, and no modification of the 2'-hydroxyl group is tolerated. ssRNA or dsDNA do not act as activators. Functionally, interferon-induced, dsRNA-activated antiviral enzyme which plays a critical role in cellular innate antiviral response. In addition, it may also play a role in other cellular processes such as apoptosis, cell growth, differentiation and gene regulation. Synthesizes higher oligomers of 2'-5'-oligoadenylates (2-5A) from ATP which then bind to the inactive monomeric form of ribonuclease L (RNase L) leading to its dimerization and subsequent activation. Activation of RNase L leads to degradation of cellular as well as viral RNA, resulting in the inhibition of protein synthesis, thus terminating viral replication. Can mediate the antiviral effect via the classical RNase L-dependent pathway or an alternative antiviral pathway independent of RNase L. This Rattus norvegicus (Rat) protein is 2'-5'-oligoadenylate synthase 1A (Oas1a).